The chain runs to 374 residues: MTDRLRATYRVKATAASIEARAKGIAVEQSVEMPLSAIDDPAVLDGIVGVVEEITERGEDCFEVRLALSTATIGGDAGQLFNMLFGNTSLQDDTVLLDIDLPDDLLASFGGPNIGAAGLRARVGASADRALTCSALKPQGLPPDRLADLARRMALGGLDFIKDDHGMADQAYAPFASRVGAVAAAVDEVNRQTGGQTRYLPSLSGHLDQLRSQVRTGLDHGIDTFLIAPMIVGPSTFHAVVREFPGAAFFAHPTLAGPSRIAPPAHFGKLFRLLGADAVIFPNSGGRFGYSRDTCQAVAEAALGPWGGLHASLPVPAGGMSLARVPEMIATYGPDVIVLIGGNLLEARDRLTEETAAFVASVAGAASRGCGLAP.

Belongs to the RuBisCO large chain family. Type IV subfamily.

It carries out the reaction 5-(methylsulfanyl)-D-ribulose 1-phosphate = S-methyl-1-thio-D-xylulose 5-phosphate. The enzyme catalyses 5-(methylsulfanyl)-D-ribulose 1-phosphate = 1-(methylsulfanyl)ribulose 5-phosphate. Its pathway is amino-acid biosynthesis; L-methionine biosynthesis via salvage pathway. It functions in the pathway metabolic intermediate biosynthesis; 1-deoxy-D-xylulose 5-phosphate biosynthesis. Its function is as follows. Catalyzes the conversion of 5-methylthio-D-ribulose 1-phosphate (MTRu-1P) to a 3:1 mixture of 1-methylthioxylulose 5-phosphate (MTXu-5P) and 1-methylthioribulose 5-phosphate (MTRu-5P). Involved in the MTA-isoprenoid shunt of the methionine salvage pathway. The chain is 5-methylthioribulose-1-phosphate isomerase from Rhodospirillum rubrum (strain ATCC 11170 / ATH 1.1.1 / DSM 467 / LMG 4362 / NCIMB 8255 / S1).